Here is a 378-residue protein sequence, read N- to C-terminus: Queuine tRNA-ribosyltransferase (378 aa).

Catalysis depends on D89, which acts as the Proton acceptor. Residues D89 to F93, D143, Q194, and G221 each bind substrate. The RNA binding stretch occupies residues G252–N258. D271 functions as the Nucleophile in the catalytic mechanism. Zn(2+)-binding residues include C309, C311, C314, and H340.

It belongs to the queuine tRNA-ribosyltransferase family. In terms of assembly, homodimer. Within each dimer, one monomer is responsible for RNA recognition and catalysis, while the other monomer binds to the replacement base PreQ1. Zn(2+) serves as cofactor.

The catalysed reaction is 7-aminomethyl-7-carbaguanine + guanosine(34) in tRNA = 7-aminomethyl-7-carbaguanosine(34) in tRNA + guanine. The protein operates within tRNA modification; tRNA-queuosine biosynthesis. Functionally, catalyzes the base-exchange of a guanine (G) residue with the queuine precursor 7-aminomethyl-7-deazaguanine (PreQ1) at position 34 (anticodon wobble position) in tRNAs with GU(N) anticodons (tRNA-Asp, -Asn, -His and -Tyr). Catalysis occurs through a double-displacement mechanism. The nucleophile active site attacks the C1' of nucleotide 34 to detach the guanine base from the RNA, forming a covalent enzyme-RNA intermediate. The proton acceptor active site deprotonates the incoming PreQ1, allowing a nucleophilic attack on the C1' of the ribose to form the product. After dissociation, two additional enzymatic reactions on the tRNA convert PreQ1 to queuine (Q), resulting in the hypermodified nucleoside queuosine (7-(((4,5-cis-dihydroxy-2-cyclopenten-1-yl)amino)methyl)-7-deazaguanosine). This Lachnospira eligens (strain ATCC 27750 / DSM 3376 / VPI C15-48 / C15-B4) (Eubacterium eligens) protein is Queuine tRNA-ribosyltransferase.